A 364-amino-acid polypeptide reads, in one-letter code: DNA primase large subunit PriL (364 aa).

[4Fe-4S] cluster-binding residues include C237, C309, C318, and C325. A disordered region spans residues 345–364 (MQNDNEKGHEEKKEGETPPQ).

This sequence belongs to the eukaryotic-type primase large subunit family. In terms of assembly, heterodimer of a small subunit (PriS) and a large subunit (PriL). The cofactor is [4Fe-4S] cluster.

Its function is as follows. Regulatory subunit of DNA primase, an RNA polymerase that catalyzes the synthesis of short RNA molecules used as primers for DNA polymerase during DNA replication. Stabilizes and modulates the activity of the small subunit, increasing the rate of DNA synthesis, and conferring RNA synthesis capability. The DNA polymerase activity may enable DNA primase to also catalyze primer extension after primer synthesis. May also play a role in DNA repair. The chain is DNA primase large subunit PriL from Methanococcoides burtonii (strain DSM 6242 / NBRC 107633 / OCM 468 / ACE-M).